Here is a 298-residue protein sequence, read N- to C-terminus: Protein Bel-1 (298 aa).

Positions 1–17 (MASWEKEKELAHLHQPE) are enriched in basic and acidic residues. Residues 1–46 (MASWEKEKELAHLHQPEDDPLPDLSLLLDMDQFEPTEGPDSNPGAE) form a disordered region. Residues 91 to 200 (SKWACARLIL…GEPLKPRVRA (110 aa)) mediate DNA binding. The Nuclear localization signal signature appears at 214–223 (ADRPKRSRWG). A transactivation domain region spans residues 225–298 (APREQPNTSS…SGPPTGPSEN (74 aa)).

In terms of assembly, homodimer or homomultimer. Forms complexes with the host nuclear factors NFIA, NFIB, NFIC or NFIX.

The protein resides in the host nucleus. In terms of biological role, transcriptional transactivator that activates the viral internal promoter (IP), thereby enhancing its own expression. This transactivation is repressed by nuclear factor I. Also transactivates the long terminal repeat (LTR) promoter, thereby inducing structural gene expression, initiating the late phase of infection. It is therefore a key regulator of viral gene expression. It directly binds to and activates DNA target sites of viral promoters and those of distinct cellular genes. Required for viral replication. In Chlorocebus aethiops (Green monkey), this protein is Protein Bel-1 (bel1).